Here is a 136-residue protein sequence, read N- to C-terminus: Histone H3.3 (136 aa).

The segment at 1 to 42 (MARTKQTARKSTGGKAPRKQLASKAARKSAPVSGGVKKPHRY) is disordered. K5 is subject to N6,N6,N6-trimethyllysine; alternate. The residue at position 5 (K5) is an N6,N6-dimethyllysine; alternate. 2 positions are modified to N6-methyllysine; alternate: K5 and K10. K10 carries the N6-acetyllysine; alternate modification. S11 bears the Phosphoserine mark. K15 carries the post-translational modification N6,N6-dimethyllysine; alternate. Residues K15, K19, K24, K28, and K37 each carry the N6-acetyllysine; alternate modification. An N6-methyllysine; alternate mark is found at K19, K24, K28, and K37. An N6,N6,N6-trimethyllysine; alternate mark is found at K28 and K37. N6,N6-dimethyllysine; alternate is present on residues K28 and K37. K57 and K65 each carry N6-acetyllysine. K80 carries the post-translational modification N6,N6,N6-trimethyllysine; alternate. At K80 the chain carries N6,N6-dimethyllysine; alternate. Residue K80 is modified to N6-methyllysine; alternate.

It belongs to the histone H3 family. As to quaternary structure, the nucleosome is a histone octamer containing two molecules each of H2A, H2B, H3 and H4 assembled in one H3-H4 heterotetramer and two H2A-H2B heterodimers. The octamer wraps approximately 147 bp of DNA. Phosphorylated to form H3S10ph. H3S10ph promotes subsequent H3K14ac formation and is required for transcriptional activation through TBP recruitment to the promoters. In terms of processing, mono-, di- and trimethylated by the COMPASS complex to form H3K4me1/2/3. H3K4me activates gene expression by regulating transcription elongation and plays a role in telomere length maintenance. H3K4me enrichment correlates with transcription levels, and occurs in a 5' to 3' gradient with H3K4me3 enrichment at the 5'-end of genes, shifting to H3K4me2 and then H3K4me1. Methylated by SET2 to form H3K36me. H3K36me represses gene expression. Methylated by DOT1 to form H3K79me. H3K79me is required for association of SIR proteins with telomeric regions and for telomeric silencing. The COMPASS-mediated formation of H3K4me2/3 and the DOT1-mediated formation of H3K79me require H2BK123ub1. Post-translationally, acetylation of histone H3 leads to transcriptional activation. H3K14ac formation by GCN5 is promoted by H3S10ph. H3K14ac can also be formed by ESA1. H3K56ac formation occurs predominantly in newly synthesized H3 molecules during G1, S and G2/M of the cell cycle and may be involved in DNA repair.

It localises to the nucleus. The protein localises to the chromosome. Core component of nucleosome. Nucleosomes wrap and compact DNA into chromatin, limiting DNA accessibility to the cellular machineries which require DNA as a template. Histones thereby play a central role in transcription regulation, DNA repair, DNA replication and chromosomal stability. DNA accessibility is regulated via a complex set of post-translational modifications of histones, also called histone code, and nucleosome remodeling. In Lodderomyces elongisporus (strain ATCC 11503 / CBS 2605 / JCM 1781 / NBRC 1676 / NRRL YB-4239) (Yeast), this protein is Histone H3.3 (HHT3).